The following is a 554-amino-acid chain: Potassium-transporting ATPase potassium-binding subunit (554 aa).

12 consecutive transmembrane segments (helical) span residues 3-23 (PVLA…LAHV), 60-80 (PAYL…LYLL), 131-151 (GLAV…VALV), 174-194 (VRVL…CGVI), 252-272 (LFEI…FGIM), 279-299 (GYAI…LMMW), 323-343 (FGIG…TGAV), 352-372 (GLGG…PGGV), 375-395 (GLYG…LMVG), 412-432 (FAAC…AAAM), 481-501 (LGLA…ALAG), and 522-542 (LFAG…YFPA).

This sequence belongs to the KdpA family. In terms of assembly, the system is composed of three essential subunits: KdpA, KdpB and KdpC.

The protein resides in the cell membrane. Part of the high-affinity ATP-driven potassium transport (or Kdp) system, which catalyzes the hydrolysis of ATP coupled with the electrogenic transport of potassium into the cytoplasm. This subunit binds the extracellular potassium ions and delivers the ions to the membrane domain of KdpB through an intramembrane tunnel. This is Potassium-transporting ATPase potassium-binding subunit from Streptomyces coelicolor (strain ATCC BAA-471 / A3(2) / M145).